Reading from the N-terminus, the 159-residue chain is Transcriptional repressor NrdR (159 aa).

The segment at 3–34 (CPYCQSEDTQVKDSRPAEDGAAIRRRRVCPDC) is a zinc-finger region. The 91-residue stretch at 49 to 139 (LVVVKKSGRK…VYRNFREAKD (91 aa)) folds into the ATP-cone domain.

This sequence belongs to the NrdR family. Requires Zn(2+) as cofactor.

Functionally, negatively regulates transcription of bacterial ribonucleotide reductase nrd genes and operons by binding to NrdR-boxes. This Mesorhizobium japonicum (strain LMG 29417 / CECT 9101 / MAFF 303099) (Mesorhizobium loti (strain MAFF 303099)) protein is Transcriptional repressor NrdR.